Consider the following 353-residue polypeptide: Immune-associated nucleotide-binding protein 8 (353 aa).

Positions 1–10 (MANDQKNSES) are enriched in polar residues. The disordered stretch occupies residues 1–43 (MANDQKNSESFPAKEDHKKDDAAAPAEVDHKDEFSASQPHPVE). The segment covering 12–34 (PAKEDHKKDDAAAPAEVDHKDEF) has biased composition (basic and acidic residues). The AIG1-type G domain occupies 40–248 (HPVENIVLVG…YTDEMYHMIK (209 aa)). The segment at 49-56 (GRTGNGKS) is G1. Residues 49–57 (GRTGNGKSA) and Ser-70 each bind GTP. A G2 region spans residues 76–80 (GVTME). Residues 98–101 (DTPG) form a G3 region. The interval 168-171 (TGGD) is G4. The segment at 207-209 (DNK) is G5. GTP is bound at residue Asn-208. Residues 244–291 (YHMIKEENERHKKEQEELESKGHSEEQLAALMKELQIMNERNLKAMAE) adopt a coiled-coil conformation.

It belongs to the TRAFAC class TrmE-Era-EngA-EngB-Septin-like GTPase superfamily. AIG1/Toc34/Toc159-like paraseptin GTPase family. IAN subfamily. In terms of tissue distribution, mainly expressed in leaves.

The polypeptide is Immune-associated nucleotide-binding protein 8 (Arabidopsis thaliana (Mouse-ear cress)).